A 369-amino-acid chain; its full sequence is CASP-like protein 4U1 (369 aa).

Residues 1–162 are disordered; it reads MASTPRTPAP…RAETKLPLSS (162 aa). Over 1–222 the chain is Cytoplasmic; that stretch reads MASTPRTPAP…AVAAVAERRE (222 aa). Over residues 7 to 23 the composition is skewed to pro residues; that stretch reads TPAPERSPPPVPTPPPP. Over residues 36–51 the composition is skewed to basic and acidic residues; the sequence is SPREEASFSSDGREGA. Composition is skewed to low complexity over residues 87 to 96 and 114 to 127; these read ANKAAAATAE and SSQT…SPTP. Residues 223–243 traverse the membrane as a helical segment; that stretch reads LLLALRLATAVLSLAAFSVIA. The Extracellular portion of the chain corresponds to 244–262; it reads SARTSGWAGDYYARHLQYR. The helical transmembrane segment at 263–283 threads the bilayer; the sequence is YAVAVNVIVFAYSVAQSLGKI. At 284 to 300 the chain is on the cytoplasmic side; sequence RHLVSPRFTFRTMSSYY. A helical transmembrane segment spans residues 301–321; that stretch reads CSLFLDQVLAYLLMSASSAAA. Over 322-339 the chain is Extracellular; that stretch reads SRNDLWVSRFGTDAFVRK. A helical membrane pass occupies residues 340–360; sequence ITGALWLSFVAFLVLALNAVI. Residues 361–369 lie on the Cytoplasmic side of the membrane; the sequence is SXANLFSMV.

This sequence belongs to the Casparian strip membrane proteins (CASP) family. As to quaternary structure, homodimer and heterodimers.

It is found in the cell membrane. In Zea mays (Maize), this protein is CASP-like protein 4U1.